The chain runs to 357 residues: Peptide chain release factor 1 (357 aa).

Q234 is subject to N5-methylglutamine.

Belongs to the prokaryotic/mitochondrial release factor family. In terms of processing, methylated by PrmC. Methylation increases the termination efficiency of RF1.

The protein resides in the cytoplasm. Its function is as follows. Peptide chain release factor 1 directs the termination of translation in response to the peptide chain termination codons UAG and UAA. The sequence is that of Peptide chain release factor 1 from Nocardioides sp. (strain ATCC BAA-499 / JS614).